Consider the following 382-residue polypeptide: ATP phosphoribosyltransferase regulatory subunit (382 aa).

The protein belongs to the class-II aminoacyl-tRNA synthetase family. HisZ subfamily. As to quaternary structure, heteromultimer composed of HisG and HisZ subunits.

The protein localises to the cytoplasm. It participates in amino-acid biosynthesis; L-histidine biosynthesis; L-histidine from 5-phospho-alpha-D-ribose 1-diphosphate: step 1/9. Its function is as follows. Required for the first step of histidine biosynthesis. May allow the feedback regulation of ATP phosphoribosyltransferase activity by histidine. The polypeptide is ATP phosphoribosyltransferase regulatory subunit (Burkholderia vietnamiensis (strain G4 / LMG 22486) (Burkholderia cepacia (strain R1808))).